The primary structure comprises 474 residues: tRNA-2-methylthio-N(6)-dimethylallyladenosine synthase (474 aa).

The MTTase N-terminal domain maps to 3–120 (KKLHIKTWGC…LPDMIEQVRR (118 aa)). [4Fe-4S] cluster contacts are provided by Cys-12, Cys-49, Cys-83, Cys-157, Cys-161, and Cys-164. Positions 143–375 (RAEGPTAFVS…QDRITQQAMR (233 aa)) constitute a Radical SAM core domain. The TRAM domain occupies 378 to 441 (RHMMGTVQRI…TNSLRGKFIR (64 aa)).

Belongs to the methylthiotransferase family. MiaB subfamily. As to quaternary structure, monomer. [4Fe-4S] cluster serves as cofactor.

It is found in the cytoplasm. The enzyme catalyses N(6)-dimethylallyladenosine(37) in tRNA + (sulfur carrier)-SH + AH2 + 2 S-adenosyl-L-methionine = 2-methylsulfanyl-N(6)-dimethylallyladenosine(37) in tRNA + (sulfur carrier)-H + 5'-deoxyadenosine + L-methionine + A + S-adenosyl-L-homocysteine + 2 H(+). In terms of biological role, catalyzes the methylthiolation of N6-(dimethylallyl)adenosine (i(6)A), leading to the formation of 2-methylthio-N6-(dimethylallyl)adenosine (ms(2)i(6)A) at position 37 in tRNAs that read codons beginning with uridine. This chain is tRNA-2-methylthio-N(6)-dimethylallyladenosine synthase, found in Shewanella sp. (strain MR-4).